We begin with the raw amino-acid sequence, 148 residues long: Dermatopontin (148 aa).

The cysteines at positions 14 and 40 are disulfide-linked. N-linked (GlcNAc...) asparagine glycosylation is present at asparagine 44. Disulfide bonds link cysteine 66/cysteine 93 and cysteine 103/cysteine 147.

The protein belongs to the dermatopontin family. In terms of processing, the terminal mannose residues of the polysaccharide are 3-O-methylated. No tyrosine sulfation was detected.

It localises to the secreted. It is found in the extracellular space. The protein localises to the extracellular matrix. Seems to mediate adhesion by cell surface integrin binding. The polypeptide is Dermatopontin (Biomphalaria glabrata (Bloodfluke planorb)).